The sequence spans 48 residues: MPQLIPFYFLNQLTYGFLLMTILLVLFSQFFLPMILRLYLTRLFISKL.

Residues glycine 16–leucine 36 traverse the membrane as a helical segment.

Belongs to the ATPase protein 8 family. In terms of assembly, F-type ATPases have 2 components, CF(1) - the catalytic core - and CF(0) - the membrane proton channel.

The protein resides in the mitochondrion membrane. Mitochondrial membrane ATP synthase (F(1)F(0) ATP synthase or Complex V) produces ATP from ADP in the presence of a proton gradient across the membrane which is generated by electron transport complexes of the respiratory chain. F-type ATPases consist of two structural domains, F(1) - containing the extramembraneous catalytic core and F(0) - containing the membrane proton channel, linked together by a central stalk and a peripheral stalk. During catalysis, ATP synthesis in the catalytic domain of F(1) is coupled via a rotary mechanism of the central stalk subunits to proton translocation. Part of the complex F(0) domain. Minor subunit located with subunit a in the membrane. The sequence is that of ATP synthase protein 8 (ATP8) from Vanderwaltozyma polyspora (strain ATCC 22028 / DSM 70294 / BCRC 21397 / CBS 2163 / NBRC 10782 / NRRL Y-8283 / UCD 57-17) (Kluyveromyces polysporus).